Here is a 97-residue protein sequence, read N- to C-terminus: NADH-ubiquinone oxidoreductase chain 4L (97 aa).

3 helical membrane passes run 1 to 21, 23 to 43, and 60 to 80; these read MALLIIILSMFYLGLMGILLN, LHFLSILLCLELLLISLFIGI, and LLLLTLSACEASIGLSLMVAL.

It belongs to the complex I subunit 4L family.

The protein localises to the mitochondrion membrane. The catalysed reaction is a ubiquinone + NADH + 5 H(+)(in) = a ubiquinol + NAD(+) + 4 H(+)(out). In terms of biological role, core subunit of the mitochondrial membrane respiratory chain NADH dehydrogenase (Complex I) that is believed to belong to the minimal assembly required for catalysis. Complex I functions in the transfer of electrons from NADH to the respiratory chain. The immediate electron acceptor for the enzyme is believed to be ubiquinone. The sequence is that of NADH-ubiquinone oxidoreductase chain 4L (ND4L) from Paracentrotus lividus (Common sea urchin).